The primary structure comprises 545 residues: Membrane protein insertase YidC (545 aa).

A run of 6 helical transmembrane segments spans residues Ala-10–Ser-30, Leu-319–Pro-339, Trp-341–Phe-361, Ile-407–Val-427, Ile-467–Ser-487, and Met-502–Ile-522.

It belongs to the OXA1/ALB3/YidC family. Type 1 subfamily. In terms of assembly, interacts with the Sec translocase complex via SecD. Specifically interacts with transmembrane segments of nascent integral membrane proteins during membrane integration.

It localises to the cell inner membrane. In terms of biological role, required for the insertion and/or proper folding and/or complex formation of integral membrane proteins into the membrane. Involved in integration of membrane proteins that insert both dependently and independently of the Sec translocase complex, as well as at least some lipoproteins. Aids folding of multispanning membrane proteins. This Borrelia recurrentis (strain A1) protein is Membrane protein insertase YidC.